The following is a 348-amino-acid chain: L-seryl-tRNA(Sec) kinase (348 aa).

25-32 (GLPAAGKS) is a binding site for ATP.

Belongs to the L-seryl-tRNA(Sec) kinase family. Mg(2+) serves as cofactor.

It carries out the reaction L-seryl-tRNA(Sec) + ATP = O-phospho-L-seryl-tRNA(Sec) + ADP. The protein operates within aminoacyl-tRNA biosynthesis; selenocysteinyl-tRNA(Sec) biosynthesis; selenocysteinyl-tRNA(Sec) from L-seryl-tRNA(Sec) (archaeal/eukaryal route): step 1/2. Its function is as follows. Specifically phosphorylates seryl-tRNA(Sec) to O-phosphoseryl-tRNA(Sec), an activated intermediate for selenocysteine biosynthesis. The chain is L-seryl-tRNA(Sec) kinase (PSTK) from Homo sapiens (Human).